Here is a 262-residue protein sequence, read N- to C-terminus: MFFMVRRKNEWPEEGELVVGTVHKVLNYGAFATLEEYPGKEAFIHISEVSSGWVKNIRDFVRENQKIVARVLRVNPRKGHVDVSMKRIREDQRTKKIQAWKIEQKAEKFLELAARDLGKDLDTAYEEVGYELMDIFGDLYGAFETAAEEGEKSLIEEGVPEDWAAVITEVAKRNITPPEVQITGYVDIKSYAPNGVEIIRKALKSAQDEGITVQAVGAPRYRLIVKSTDYLKAEKQLKEAAQKCIEIVEKEGGEGEFLRELT.

The region spanning 15–86 (GELVVGTVHK…RKGHVDVSMK (72 aa)) is the S1 motif domain.

Belongs to the eIF-2-alpha family. As to quaternary structure, heterotrimer composed of an alpha, a beta and a gamma chain.

EIF-2 functions in the early steps of protein synthesis by forming a ternary complex with GTP and initiator tRNA. The sequence is that of Translation initiation factor 2 subunit alpha (eif2a) from Methanothermobacter thermautotrophicus (strain ATCC 29096 / DSM 1053 / JCM 10044 / NBRC 100330 / Delta H) (Methanobacterium thermoautotrophicum).